The sequence spans 57 residues: Weak toxin CM-1b (57 aa).

4 disulfides stabilise this stretch: Cys-3–Cys-19, Cys-12–Cys-37, Cys-40–Cys-49, and Cys-50–Cys-55.

It belongs to the three-finger toxin family. Short-chain subfamily. Orphan group XX sub-subfamily. As to expression, expressed by the venom gland.

It localises to the secreted. The polypeptide is Weak toxin CM-1b (Hemachatus haemachatus (Rinkhals)).